We begin with the raw amino-acid sequence, 133 residues long: NADPH-dependent 7-cyano-7-deazaguanine reductase (133 aa).

The Thioimide intermediate role is filled by C48. D55 functions as the Proton donor in the catalytic mechanism. Substrate contacts are provided by residues 70-72 and 89-90; these read VEL and QE.

Belongs to the GTP cyclohydrolase I family. QueF type 1 subfamily.

The protein resides in the cytoplasm. It carries out the reaction 7-aminomethyl-7-carbaguanine + 2 NADP(+) = 7-cyano-7-deazaguanine + 2 NADPH + 3 H(+). It participates in tRNA modification; tRNA-queuosine biosynthesis. Catalyzes the NADPH-dependent reduction of 7-cyano-7-deazaguanine (preQ0) to 7-aminomethyl-7-deazaguanine (preQ1). The polypeptide is NADPH-dependent 7-cyano-7-deazaguanine reductase (Thermoanaerobacter pseudethanolicus (strain ATCC 33223 / 39E) (Clostridium thermohydrosulfuricum)).